Here is a 369-residue protein sequence, read N- to C-terminus: LIM homeobox transcription factor 1-beta (369 aa).

LIM zinc-binding domains follow at residues 23–73 (CEGC…CKQD) and 82–135 (CSGC…CKGD). Residues 143–196 (LSSVSPDESDSVKSEDEDGDMKPAKGQGSQSKGGGDDGKDPRRPKRPRTILTTQ) form a disordered region. Residues 186-245 (PKRPRTILTTQQRRAFKASFEVSSKPCRKVRETLAAETGLSVRVVQVWFQNQRAKMKKLA) constitute a DNA-binding region (homeobox).

As to quaternary structure, interacts with DHX9.

The protein localises to the nucleus. In terms of biological role, transcription factor involved in the regulation of podocyte-expressed genes. Essential for the specification of dorsal limb fate at both the zeugopodal and autopodal levels. In Mesocricetus auratus (Golden hamster), this protein is LIM homeobox transcription factor 1-beta (LMX1B).